The primary structure comprises 1295 residues: Phosphoribosylformylglycinamidine synthase (1295 aa).

Residues 302–327 (APFSGAATGSGGEIRDEGATGRGSKP) form a disordered region. ATP contacts are provided by residues 306-317 (GAATGSGGEIRD) and Ala-677. Asp-678, Glu-717, Asn-721, and Asp-884 together coordinate Mg(2+). An ATP-binding site is contributed by Ser-886. The region spanning 1042–1295 (MAILREQGVN…MFRNARVYLG (254 aa)) is the Glutamine amidotransferase type-1 domain. Cys-1135 serves as the catalytic Nucleophile. Active-site residues include His-1260 and Glu-1262.

It in the N-terminal section; belongs to the FGAMS family. Monomer.

The protein localises to the cytoplasm. The enzyme catalyses N(2)-formyl-N(1)-(5-phospho-beta-D-ribosyl)glycinamide + L-glutamine + ATP + H2O = 2-formamido-N(1)-(5-O-phospho-beta-D-ribosyl)acetamidine + L-glutamate + ADP + phosphate + H(+). It functions in the pathway purine metabolism; IMP biosynthesis via de novo pathway; 5-amino-1-(5-phospho-D-ribosyl)imidazole from N(2)-formyl-N(1)-(5-phospho-D-ribosyl)glycinamide: step 1/2. Functionally, phosphoribosylformylglycinamidine synthase involved in the purines biosynthetic pathway. Catalyzes the ATP-dependent conversion of formylglycinamide ribonucleotide (FGAR) and glutamine to yield formylglycinamidine ribonucleotide (FGAM) and glutamate. The polypeptide is Phosphoribosylformylglycinamidine synthase (Pseudoalteromonas atlantica (strain T6c / ATCC BAA-1087)).